The primary structure comprises 188 residues: dCTP deaminase (188 aa).

DCTP-binding positions include 111 to 116 (KSTYAR), 135 to 137 (TLE), Q156, Y170, and Q180. The Proton donor/acceptor role is filled by E137.

Belongs to the dCTP deaminase family. As to quaternary structure, homotrimer.

It catalyses the reaction dCTP + H2O + H(+) = dUTP + NH4(+). Its pathway is pyrimidine metabolism; dUMP biosynthesis; dUMP from dCTP (dUTP route): step 1/2. In terms of biological role, catalyzes the deamination of dCTP to dUTP. The protein is dCTP deaminase of Dichelobacter nodosus (strain VCS1703A).